The following is a 327-amino-acid chain: E3 ubiquitin-protein ligase SINAT4 (327 aa).

Residues 1 to 27 (METDSMECVSSTGNEIHQNGNGHQSYQ) are disordered. Residues 8 to 27 (CVSSTGNEIHQNGNGHQSYQ) show a composition bias toward polar residues. The RING-type zinc finger occupies 64 to 100 (CPVCTYSMYPPIHQCHNGHTLCSTCKVRVHNRCPTCR). An SBD region spans residues 114–307 (VAESLELPCK…KELKLRVTGK (194 aa)). Residues 117–177 (SLELPCKFYN…LVAHLRDDHK (61 aa)) form an SIAH-type zinc finger. Residues C122, C129, H141, C145, C152, C159, H171, and H176 each coordinate Zn(2+).

It belongs to the SINA (Seven in absentia) family. In terms of assembly, interacts with SINAT6. Interacts with WAV3. Interacts with FREE1. Interacts with ELC/VPS23A.

The protein resides in the endosome. Its subcellular location is the multivesicular body. It is found in the cytoplasmic vesicle. The protein localises to the autophagosome. It catalyses the reaction S-ubiquitinyl-[E2 ubiquitin-conjugating enzyme]-L-cysteine + [acceptor protein]-L-lysine = [E2 ubiquitin-conjugating enzyme]-L-cysteine + N(6)-ubiquitinyl-[acceptor protein]-L-lysine.. It functions in the pathway protein modification; protein ubiquitination. E3 ubiquitin-protein ligase that mediates ubiquitination and subsequent proteasomal degradation of target proteins. E3 ubiquitin ligases accept ubiquitin from an E2 ubiquitin-conjugating enzyme in the form of a thioester and then directly transfers the ubiquitin to targeted substrates. It probably triggers the ubiquitin-mediated degradation of different substrates. Modulates directly the ubiquitination and proteasomal-dependent degradation of FREE1, a component of the ESCRT-I complex. Modulates directly the ubiquitination and proteasomal-dependent degradation of ELC/VPS23A, a component of the ESCRT-I complex. The polypeptide is E3 ubiquitin-protein ligase SINAT4 (Arabidopsis thaliana (Mouse-ear cress)).